We begin with the raw amino-acid sequence, 1110 residues long: Error-prone DNA polymerase (1110 aa).

The segment at 1072–1110 is disordered; sequence LGELHEPLNDDRREHPDNPAQRIRHPRDVRILPPSRDFH. Composition is skewed to basic and acidic residues over residues 1073–1088 and 1097–1110; these read GELH…EHPD and PRDV…RDFH.

It belongs to the DNA polymerase type-C family. DnaE2 subfamily.

The protein resides in the cytoplasm. It carries out the reaction DNA(n) + a 2'-deoxyribonucleoside 5'-triphosphate = DNA(n+1) + diphosphate. Its function is as follows. DNA polymerase involved in damage-induced mutagenesis and translesion synthesis (TLS). It is not the major replicative DNA polymerase. This chain is Error-prone DNA polymerase, found in Rhodopseudomonas palustris (strain BisB5).